A 499-amino-acid chain; its full sequence is Interferon regulatory factor 5 (499 aa).

Residues 12–18 carry the Nuclear localization signal motif; that stretch reads PRRVRLK. Positions 14–122 form a DNA-binding region, IRF tryptophan pentad repeat; it reads RVRLKPWLVA…QPYKVYEVCS (109 aa). The interval 121–142 is disordered; the sequence is CSNGPAPAESQPSEDNAEEEEE. Residues 145–155 carry the Nuclear export signal motif; that stretch reads LQKMLPGLSIT. Phosphoserine; by TBK1 is present on residues Ser-153 and Ser-294. Ser-302 carries the phosphoserine modification. Glycyl lysine isopeptide (Lys-Gly) (interchain with G-Cter in ubiquitin) cross-links involve residues Lys-412 and Lys-413. 5 positions are modified to phosphoserine: Ser-432, Ser-436, Ser-438, Ser-441, and Ser-447.

The protein belongs to the IRF family. Homodimer, when phosphorylated. Interacts with TASL (via pLxIS motif); interaction takes place downstream of TLR7, TLR8 or TLR9, leading to its activation. Interacts with MYD88 and TRAF6. Post-translationally, phosphorylation of serine and threonine residues by IKBKB in a C-terminal autoinhibitory region, stimulates dimerization, transport into the nucleus, assembly with the coactivator CBP/EP300 and initiation of transcription. In terms of processing, 'Lys-63'-linked polyubiquitination by TRAF6 is required for activation.

The protein resides in the cytoplasm. It is found in the nucleus. Maintained as a monomer in an autoinhibited state. Phosphorylation and activation follow the following steps: innate adapter protein TASL recruits IRF5, thereby licensing IRF5 for phosphorylation by IKBKB. Phosphorylated IRF5 dissociates from the adapter proteins, dimerizes, and then enters the nucleus to induce IFNs. Transcription factor that plays a critical role in innate immunity by activating expression of type I interferon (IFN) IFNA and INFB and inflammatory cytokines downstream of endolysosomal toll-like receptors TLR7, TLR8 and TLR9. Regulates the transcription of type I IFN genes (IFN-alpha and IFN-beta) and IFN-stimulated genes (ISG) by binding to an interferon-stimulated response element (ISRE) in their promoters. Can efficiently activate both the IFN-beta (IFNB) and the IFN-alpha (IFNA) genes and mediate their induction downstream of the TLR-activated, MyD88-dependent pathway. The chain is Interferon regulatory factor 5 from Bos taurus (Bovine).